We begin with the raw amino-acid sequence, 444 residues long: Interferon-induced protein 44 (444 aa).

The 152-residue stretch at 1–152 (MAVTTRLTWL…IQDYEVFRCE (152 aa)) folds into the TLDc domain.

The protein belongs to the IFI44 family. Hepatocytes.

The protein resides in the cytoplasm. This protein aggregates to form microtubular structures. This Pan troglodytes (Chimpanzee) protein is Interferon-induced protein 44 (IFI44).